Reading from the N-terminus, the 158-residue chain is NAD(P)H-quinone oxidoreductase subunit J, chloroplastic (158 aa).

This sequence belongs to the complex I 30 kDa subunit family. In terms of assembly, NDH is composed of at least 16 different subunits, 5 of which are encoded in the nucleus.

The protein localises to the plastid. The protein resides in the chloroplast thylakoid membrane. The catalysed reaction is a plastoquinone + NADH + (n+1) H(+)(in) = a plastoquinol + NAD(+) + n H(+)(out). It carries out the reaction a plastoquinone + NADPH + (n+1) H(+)(in) = a plastoquinol + NADP(+) + n H(+)(out). NDH shuttles electrons from NAD(P)H:plastoquinone, via FMN and iron-sulfur (Fe-S) centers, to quinones in the photosynthetic chain and possibly in a chloroplast respiratory chain. The immediate electron acceptor for the enzyme in this species is believed to be plastoquinone. Couples the redox reaction to proton translocation, and thus conserves the redox energy in a proton gradient. The polypeptide is NAD(P)H-quinone oxidoreductase subunit J, chloroplastic (Trachelium caeruleum (Blue throatwort)).